We begin with the raw amino-acid sequence, 212 residues long: Protein-L-isoaspartate O-methyltransferase (212 aa).

S61 is an active-site residue.

The protein belongs to the methyltransferase superfamily. L-isoaspartyl/D-aspartyl protein methyltransferase family.

It is found in the cytoplasm. The enzyme catalyses [protein]-L-isoaspartate + S-adenosyl-L-methionine = [protein]-L-isoaspartate alpha-methyl ester + S-adenosyl-L-homocysteine. Catalyzes the methyl esterification of L-isoaspartyl residues in peptides and proteins that result from spontaneous decomposition of normal L-aspartyl and L-asparaginyl residues. It plays a role in the repair and/or degradation of damaged proteins. The polypeptide is Protein-L-isoaspartate O-methyltransferase (Pseudoalteromonas atlantica (strain T6c / ATCC BAA-1087)).